The sequence spans 273 residues: Zinc finger protein 80 (273 aa).

7 consecutive C2H2-type zinc fingers follow at residues 49-71, 77-99, 103-127, 133-155, 161-183, 189-211, and 217-239; these read YKCK…QQIH, YECQ…VRIH, KPCK…HQIH, YECS…RMTH, FGCK…MKIH, YKCS…SMTH, and YECK…TRSH.

Belongs to the krueppel C2H2-type zinc-finger protein family.

The protein localises to the nucleus. Its function is as follows. May be involved in transcriptional regulation. The polypeptide is Zinc finger protein 80 (ZNF80) (Pongo pygmaeus (Bornean orangutan)).